A 491-amino-acid polypeptide reads, in one-letter code: Angiopoietin-related protein 1 (491 aa).

A signal peptide spans 1–23; that stretch reads MKTFTWTLGVLFFLLVDTGHCRG. Positions 80 to 168 form a coiled coil; that stretch reads ITRMDLENLK…LNVTTEMLKM (89 aa). N-linked (GlcNAc...) asparagine glycosylation is found at asparagine 160 and asparagine 188. Residues 271-491 form the Fibrinogen C-terminal domain; that stretch reads FINEGPFKDC…AVQMMIKPID (221 aa). Intrachain disulfides connect cysteine 280–cysteine 309 and cysteine 432–cysteine 445.

Highly expressed in adrenal gland, placenta, thyroid gland, heart, skeletal muscle and small intestine. Weakly expressed in testis, ovary, colon, pancreas, kidney and stomach.

It localises to the secreted. The protein is Angiopoietin-related protein 1 (ANGPTL1) of Homo sapiens (Human).